Reading from the N-terminus, the 200-residue chain is MSGFKQHTGLVVPLDAANVDTDAIIPKQFLQKVSRLGFGKHLFHDWRFLDDAGERPNPEFVMNAPRYQGASILLARENFGCGSSREHAPWALADYGIKAMIAPSFADIFYGNSINNQMVPVRLTEQEVDELFQFVEANEGAQIEVDLEALKVRANGKEYDFEIDEFRRHCLLNGLDNIGLTLQHEDKIAEYEANIPSFLR.

The protein belongs to the LeuD family. LeuD type 1 subfamily. As to quaternary structure, heterodimer of LeuC and LeuD.

It carries out the reaction (2R,3S)-3-isopropylmalate = (2S)-2-isopropylmalate. The protein operates within amino-acid biosynthesis; L-leucine biosynthesis; L-leucine from 3-methyl-2-oxobutanoate: step 2/4. Its function is as follows. Catalyzes the isomerization between 2-isopropylmalate and 3-isopropylmalate, via the formation of 2-isopropylmaleate. In Vibrio parahaemolyticus serotype O3:K6 (strain RIMD 2210633), this protein is 3-isopropylmalate dehydratase small subunit.